The sequence spans 377 residues: uncharacterized protein (377 aa).

A coiled-coil region spans residues 309–375 (NIISVDKIKE…ISNLNKKLKK (67 aa)).

It belongs to the mimivirus L5 family.

This is an uncharacterized protein from Acanthamoeba polyphaga (Amoeba).